Reading from the N-terminus, the 326-residue chain is 2-dehydropantoate 2-reductase (326 aa).

NADP(+) is bound by residues 7–12 and Asn-103; that span reads GAGAIG. Residue Asn-103 participates in substrate binding. Lys-205 serves as the catalytic Proton donor. The substrate site is built by Asn-209, Asn-213, and Ser-274. Glu-286 contributes to the NADP(+) binding site.

The protein belongs to the ketopantoate reductase family.

The protein localises to the cytoplasm. The catalysed reaction is (R)-pantoate + NADP(+) = 2-dehydropantoate + NADPH + H(+). Its pathway is cofactor biosynthesis; (R)-pantothenate biosynthesis; (R)-pantoate from 3-methyl-2-oxobutanoate: step 2/2. Its function is as follows. Catalyzes the NADPH-dependent reduction of ketopantoate into pantoic acid. This Mesorhizobium japonicum (strain LMG 29417 / CECT 9101 / MAFF 303099) (Mesorhizobium loti (strain MAFF 303099)) protein is 2-dehydropantoate 2-reductase.